A 301-amino-acid polypeptide reads, in one-letter code: Methionyl-tRNA formyltransferase (301 aa).

(6S)-5,6,7,8-tetrahydrofolate is bound at residue 109-112 (SLLP).

It belongs to the Fmt family.

The catalysed reaction is L-methionyl-tRNA(fMet) + (6R)-10-formyltetrahydrofolate = N-formyl-L-methionyl-tRNA(fMet) + (6S)-5,6,7,8-tetrahydrofolate + H(+). Functionally, attaches a formyl group to the free amino group of methionyl-tRNA(fMet). The formyl group appears to play a dual role in the initiator identity of N-formylmethionyl-tRNA by promoting its recognition by IF2 and preventing the misappropriation of this tRNA by the elongation apparatus. This Anaplasma marginale (strain St. Maries) protein is Methionyl-tRNA formyltransferase.